The primary structure comprises 278 residues: Probable endonuclease 4 (278 aa).

Residues histidine 69, histidine 109, glutamate 145, aspartate 179, histidine 182, histidine 216, aspartate 229, histidine 231, and glutamate 261 each contribute to the Zn(2+) site.

The protein belongs to the AP endonuclease 2 family. It depends on Zn(2+) as a cofactor.

The enzyme catalyses Endonucleolytic cleavage to 5'-phosphooligonucleotide end-products.. Endonuclease IV plays a role in DNA repair. It cleaves phosphodiester bonds at apurinic or apyrimidinic (AP) sites, generating a 3'-hydroxyl group and a 5'-terminal sugar phosphate. The chain is Probable endonuclease 4 from Buchnera aphidicola subsp. Baizongia pistaciae (strain Bp).